The chain runs to 284 residues: NAD kinase (284 aa).

The active-site Proton acceptor is aspartate 60. NAD(+) contacts are provided by residues 60–61 (DG), 134–135 (ND), lysine 145, arginine 162, aspartate 164, and glutamine 235.

This sequence belongs to the NAD kinase family. The cofactor is a divalent metal cation.

Its subcellular location is the cytoplasm. It carries out the reaction NAD(+) + ATP = ADP + NADP(+) + H(+). Its function is as follows. Involved in the regulation of the intracellular balance of NAD and NADP, and is a key enzyme in the biosynthesis of NADP. Catalyzes specifically the phosphorylation on 2'-hydroxyl of the adenosine moiety of NAD to yield NADP. The polypeptide is NAD kinase (Treponema denticola (strain ATCC 35405 / DSM 14222 / CIP 103919 / JCM 8153 / KCTC 15104)).